A 182-amino-acid chain; its full sequence is MADSENQGPAEPSQAAAAAEAAAEEVMAEGGAQGGDCDSAAGDPDSAAGQMAEEPQTPAENAPKPKNDFIESLPNSVKCRVLALKKLQKRCDKIEAKFDKEFQALEKKYNDIYKPLLAKIQELTGEMEGCAWTLEGEEEEEEEYEDDEEEGEDEEEEEAAAEAAAGAKHDDAHAEMPDDAKK.

A disordered region spans residues 1–71 (MADSENQGPA…APKPKNDFIE (71 aa)). Composition is skewed to low complexity over residues 7–21 (QGPA…AAEA) and 28–49 (AEGG…SAAG). Residues 81–107 (VLALKKLQKRCDKIEAKFDKEFQALEK) adopt a coiled-coil conformation. The disordered stretch occupies residues 134-182 (LEGEEEEEEEYEDDEEEGEDEEEEEAAAEAAAGAKHDDAHAEMPDDAKK). Acidic residues predominate over residues 135–160 (EGEEEEEEEYEDDEEEGEDEEEEEAA). Positions 167 to 182 (AKHDDAHAEMPDDAKK) are enriched in basic and acidic residues.

It belongs to the nucleosome assembly protein (NAP) family. As to expression, predominantly expressed in brain.

It localises to the nucleus. The protein is Nucleosome assembly protein 1-like 5 (NAP1L5) of Homo sapiens (Human).